The sequence spans 227 residues: Peroxiredoxin 1 (227 aa).

The 156-residue stretch at 6 to 161 (PLIGEKFPEM…ILRLIKSLQM (156 aa)) folds into the Thioredoxin domain. The active-site Cysteine sulfenic acid (-SOH) intermediate is Cys48. Arg124 lines the substrate pocket.

Belongs to the peroxiredoxin family. Prx6 subfamily. As to quaternary structure, homodecamer. Pentamer of dimers that assemble into a ring structure.

The protein localises to the cytoplasm. The enzyme catalyses a hydroperoxide + [thioredoxin]-dithiol = an alcohol + [thioredoxin]-disulfide + H2O. Functionally, thiol-specific peroxidase that catalyzes the reduction of hydrogen peroxide and organic hydroperoxides to water and alcohols, respectively. Plays a role in cell protection against oxidative stress by detoxifying peroxides. This chain is Peroxiredoxin 1, found in Picrophilus torridus (strain ATCC 700027 / DSM 9790 / JCM 10055 / NBRC 100828 / KAW 2/3).